Consider the following 919-residue polypeptide: GPI ethanolamine phosphate transferase 1 (919 aa).

Topologically, residues 1–8 are cytoplasmic; sequence MWSRHRLY. Residues 9 to 29 traverse the membrane as a helical segment; the sequence is FIVAGVLFHLFYLWSIFDIYF. Residues 30 to 456 lie on the Lumenal side of the membrane; sequence VSPLVHGMKQ…TTYNWRFIRT (427 aa). N-linked (GlcNAc...) asparagine glycans are attached at residues asparagine 138, asparagine 196, asparagine 201, asparagine 285, and asparagine 311. The chain crosses the membrane as a helical span at residues 457–477; it reads IVTLGFLGWIVYSFSIFLRLF. Residues 478 to 487 lie on the Cytoplasmic side of the membrane; sequence ILNRDYNSHK. The chain crosses the membrane as a helical span at residues 488–508; that stretch reads SLLNYFIFGSLTIILNYVLYY. Residues 509-510 are Lumenal-facing; that stretch reads QK. The helical transmembrane segment at 511 to 531 threads the bilayer; sequence APFNYYMYLFFPLIFWSEIFT. Residues 532–558 are Cytoplasmic-facing; sequence DRVVLDDGVKEFLKGISIPKRIILVSA. The chain crosses the membrane as a helical span at residues 559–579; it reads IILVYESIVYAFFDRWIFSLI. The Lumenal portion of the chain corresponds to 580–598; the sequence is FNMLSFYPLICGYRDWKRN. The helical transmembrane segment at 599–619 threads the bilayer; that stretch reads TLWFITGAAISVFTLLDAVKI. Glutamate 620 is a topological domain (cytoplasmic). Residues 621–641 form a helical membrane-spanning segment; sequence SLTQINIASGLIVLTALSGFL. Residues 642-653 are Lumenal-facing; it reads HLRKQLNSYTTT. The helical transmembrane segment at 654-674 threads the bilayer; that stretch reads VFICQILLVILMVLATNKSIV. The Cytoplasmic portion of the chain corresponds to 675 to 686; that stretch reads SLQNRTGLPRDA. The helical transmembrane segment at 687–707 threads the bilayer; that stretch reads QVAGWVILVVSLLLMPLIHYM. Over 708–718 the chain is Lumenal; that stretch reads KPNNNYKVRML. Residues 719-739 traverse the membrane as a helical segment; sequence IIFLTFAPTFIILTISFESFF. The Cytoplasmic segment spans residues 740-773; sequence YLVFSAYIVQWIEIESKLKEQTPNTSHYKQLIRV. The helical transmembrane segment at 774–794 threads the bilayer; that stretch reads TIIGFFLLQNAFFGTGNVASI. The Lumenal segment spans residues 795–815; that stretch reads SSFSLDSVYRLMPIFDPFPMG. A helical transmembrane segment spans residues 816–836; it reads ALLVIKLIIPYIILSAGLGIL. At 837 to 845 the chain is on the cytoplasmic side; the sequence is NLKLHIKDY. The helical transmembrane segment at 846-866 threads the bilayer; the sequence is TISTLIISTSDILSLNFFYLL. Residues 867–882 are Lumenal-facing; it reads KTEGSWLDIGITISNY. The helical transmembrane segment at 883–903 threads the bilayer; it reads CLAILSSLFMLILEIVAHVVL. The Cytoplasmic portion of the chain corresponds to 904–919; it reads KNVQLSKPVIASKKTN.

It belongs to the PIGG/PIGN/PIGO family. PIGN subfamily.

It is found in the endoplasmic reticulum membrane. Its pathway is glycolipid biosynthesis; glycosylphosphatidylinositol-anchor biosynthesis. In terms of biological role, ethanolamine phosphate transferase involved in glycosylphosphatidylinositol-anchor biosynthesis. Transfers ethanolamine phosphate to the first alpha-1,4-linked mannose of the glycosylphosphatidylinositol precursor of GPI-anchor. The protein is GPI ethanolamine phosphate transferase 1 (MCD4) of Kluyveromyces lactis (strain ATCC 8585 / CBS 2359 / DSM 70799 / NBRC 1267 / NRRL Y-1140 / WM37) (Yeast).